The sequence spans 1218 residues: Coatomer subunit alpha-3 (1218 aa).

9 WD repeats span residues 7-48 (TKSN…DRFD), 49-88 (EHDGPVRGVHFHATQPLFVSGGDDYKIKVWNYKTHRCLFT), 91-132 (GHLD…AVLT), 133-172 (GHNHYVMCASFHPKEDLVVSASLDQTVRVWDIGALRKKTV), 202-241 (GHDRGVNWASFHPTLPLIVSGADDRQVKLWRMNDTKAWEV), 246-285 (GHMNNVSCVMFHAKQDIIVSNSEDKSIRVWDATKRTGIQT), 288-326 (REHDRFWILAAHPEMNLLAAGHDNGMIVFKLERERPAFS), 363-404 (SLNQ…AGRT), and 450-489 (PLPIAMDAIYYAGTGNLLCKAEDRVTIFDLQQRLILGELQ). The interval 854–893 (AMANGGDGFDAEEGEANEEDGEEGGWDLEDLELPPEAETP) is disordered. Over residues 862 to 888 (FDAEEGEANEEDGEEGGWDLEDLELPP) the composition is skewed to acidic residues.

In terms of assembly, oligomeric complex that consists of at least the alpha, beta, beta', gamma, delta, epsilon and zeta subunits.

It is found in the cytoplasm. Its subcellular location is the golgi apparatus membrane. The protein resides in the cytoplasmic vesicle. The protein localises to the COPI-coated vesicle membrane. Functionally, the coatomer is a cytosolic protein complex that binds to dilysine motifs and reversibly associates with Golgi non-clathrin-coated vesicles, which further mediate biosynthetic protein transport from the ER, via the Golgi up to the trans Golgi network. Coatomer complex is required for budding from Golgi membranes, and is essential for the retrograde Golgi-to-ER transport of dilysine-tagged proteins. In Oryza sativa subsp. japonica (Rice), this protein is Coatomer subunit alpha-3.